Here is a 435-residue protein sequence, read N- to C-terminus: Gamma-glutamyl phosphate reductase (435 aa).

The protein belongs to the gamma-glutamyl phosphate reductase family.

It is found in the cytoplasm. The enzyme catalyses L-glutamate 5-semialdehyde + phosphate + NADP(+) = L-glutamyl 5-phosphate + NADPH + H(+). It participates in amino-acid biosynthesis; L-proline biosynthesis; L-glutamate 5-semialdehyde from L-glutamate: step 2/2. Catalyzes the NADPH-dependent reduction of L-glutamate 5-phosphate into L-glutamate 5-semialdehyde and phosphate. The product spontaneously undergoes cyclization to form 1-pyrroline-5-carboxylate. This Nostoc punctiforme (strain ATCC 29133 / PCC 73102) protein is Gamma-glutamyl phosphate reductase.